Consider the following 303-residue polypeptide: D-alanine--D-alanine ligase (303 aa).

In terms of domain architecture, ATP-grasp spans 104–300; the sequence is KLMWQAVGLP…FEKLVERVLE (197 aa). 132-187 contributes to the ATP binding site; sequence IAKLGLPVFVKPSSEGSSVGVTKVKTVEQLLPAVEEALKFDSIVLVEAFLAGKEYS. Positions 254, 267, and 269 each coordinate Mg(2+).

This sequence belongs to the D-alanine--D-alanine ligase family. Mg(2+) serves as cofactor. Requires Mn(2+) as cofactor.

Its subcellular location is the cytoplasm. It catalyses the reaction 2 D-alanine + ATP = D-alanyl-D-alanine + ADP + phosphate + H(+). The protein operates within cell wall biogenesis; peptidoglycan biosynthesis. Its function is as follows. Cell wall formation. This Actinobacillus pleuropneumoniae serotype 5b (strain L20) protein is D-alanine--D-alanine ligase.